The chain runs to 350 residues: Eukaryotic translation initiation factor 3 subunit I (350 aa).

WD repeat units follow at residues 8-49 (GHER…GTLE), 51-89 (HQGV…CVYT), 91-135 (NSPS…ASLT), 149-190 (QNGS…KSLQ), 198-240 (EKNV…KVYK), and 296-335 (GHFG…KDFL).

It belongs to the eIF-3 subunit I family. In terms of assembly, component of the eukaryotic translation initiation factor 3 (eIF-3) complex.

It is found in the cytoplasm. In terms of biological role, component of the eukaryotic translation initiation factor 3 (eIF-3) complex, which is involved in protein synthesis of a specialized repertoire of mRNAs and, together with other initiation factors, stimulates binding of mRNA and methionyl-tRNAi to the 40S ribosome. The eIF-3 complex specifically targets and initiates translation of a subset of mRNAs involved in cell proliferation. This is Eukaryotic translation initiation factor 3 subunit I from Lodderomyces elongisporus (strain ATCC 11503 / CBS 2605 / JCM 1781 / NBRC 1676 / NRRL YB-4239) (Yeast).